An 851-amino-acid chain; its full sequence is DNA mismatch repair protein MutS (851 aa).

An ATP-binding site is contributed by 602–609; that stretch reads GPNMSGKS.

Belongs to the DNA mismatch repair MutS family.

Functionally, this protein is involved in the repair of mismatches in DNA. It is possible that it carries out the mismatch recognition step. This protein has a weak ATPase activity. This chain is DNA mismatch repair protein MutS, found in Streptococcus pyogenes serotype M49 (strain NZ131).